The following is a 993-amino-acid chain: Lateral signaling target protein 2 homolog (993 aa).

Disordered regions lie at residues D340–D449, D494–Q623, G759–E813, and A825–W902. Low complexity predominate over residues N343 to S360. Polar residues predominate over residues R372 to V405. Over residues D409–T448 the composition is skewed to acidic residues. Phosphoserine is present on residues S525 and S526. Over residues S535 to G549 the composition is skewed to polar residues. Basic residues predominate over residues S559–R608. The segment covering G759–S801 has biased composition (low complexity). Phosphoserine is present on S808. Composition is skewed to low complexity over residues S842–P862 and T884–T896. The segment at D905–I965 adopts an FYVE-type zinc-finger fold. C911, C914, C927, C930, C935, C938, C957, and C960 together coordinate Zn(2+). The segment at S968–S993 is disordered. The span at M978 to S993 shows a compositional bias: polar residues.

This sequence belongs to the lst-2 family.

Functionally, negative regulator of epidermal growth factor receptor (EGFR) signaling. This is Lateral signaling target protein 2 homolog from Drosophila willistoni (Fruit fly).